The primary structure comprises 185 residues: Ribosome-recycling factor (185 aa).

This sequence belongs to the RRF family.

The protein localises to the cytoplasm. Responsible for the release of ribosomes from messenger RNA at the termination of protein biosynthesis. May increase the efficiency of translation by recycling ribosomes from one round of translation to another. In Histophilus somni (strain 2336) (Haemophilus somnus), this protein is Ribosome-recycling factor.